The following is a 177-amino-acid chain: Bifunctional protein PyrR (177 aa).

Positions 99 to 111 (VVLVDDVLFTGRT) match the PRPP-binding motif.

Belongs to the purine/pyrimidine phosphoribosyltransferase family. PyrR subfamily.

The catalysed reaction is UMP + diphosphate = 5-phospho-alpha-D-ribose 1-diphosphate + uracil. Its function is as follows. Regulates the transcription of the pyrimidine nucleotide (pyr) operon in response to exogenous pyrimidines. In terms of biological role, also displays a weak uracil phosphoribosyltransferase activity which is not physiologically significant. In Citrifermentans bemidjiense (strain ATCC BAA-1014 / DSM 16622 / JCM 12645 / Bem) (Geobacter bemidjiensis), this protein is Bifunctional protein PyrR.